The sequence spans 427 residues: Tuberculostearic acid methyltransferase UfaA1 (427 aa).

Belongs to the CFA/CMAS family.

It participates in lipid metabolism; fatty acid biosynthesis. With respect to regulation, inhibited by S-adenosyl-L-homocysteine. Its function is as follows. Involved in the biosynthesis of the tuberculostearic acid (10-methylstearic-acid or TSA), a constituent lipid of the mycobacterial cell wall. Catalyzes the transfer of the methyl group from S-adenosyl-L-methionine (SAM) to the double bond of oleic acid in phosphatidylethanolamine or phosphatidylcholine to produce TSA. The polypeptide is Tuberculostearic acid methyltransferase UfaA1 (Mycobacterium tuberculosis (strain ATCC 25618 / H37Rv)).